A 243-amino-acid chain; its full sequence is Vesicle-associated membrane protein-associated protein B (243 aa).

N-acetylalanine is present on Ala-2. Residues Ala-2–Glu-218 lie on the Cytoplasmic side of the membrane. The region spanning Val-7–Glu-124 is the MSP domain. Ser-146 carries the phosphoserine modification. A Glycyl lysine isopeptide (Lys-Gly) (interchain with G-Cter in SUMO1) cross-link involves residue Lys-147. A Phosphoserine modification is found at Ser-159. Positions Leu-161–Leu-196 form a coiled coil. Position 206 is a phosphoserine (Ser-206). A helical; Anchor for type IV membrane protein membrane pass occupies residues Gly-219–Gly-239.

This sequence belongs to the VAMP-associated protein (VAP) (TC 9.B.17) family. As to quaternary structure, homodimer, and heterodimer with VAPA. Interacts with VAMP1 and VAMP2. Interacts (via MSP domain) with ZFYVE27. Interacts with RMDN3. Interacts with KIF5A in a ZFYVE27-dependent manner. Interacts (via MSP domain) with STARD3 (via phospho-FFAT motif). Interacts with STARD3NL (via FFAT motif). Interacts with CERT1. Interacts with PLEKHA3 and SACM1L to form a ternary complex. Interacts with VPS13A (via FFAT motif). Interacts with RB1CC1 (via phosphorylated FFAT motif), MIGA2 (via phosphorylated FFAT motif), RMDN3 (via phosphorylated FFAT motif), OSBPL1A (via FFAT motif), KCNB1 (via phosphorylated FFAT motif) and KCNB2 (via phosphorylated FFAT motif). Interacts (via MSP domain) with WDR44; the interactions connect the endoplasmic reticulum (ER) with the endosomal tubule. Ubiquitous.

It is found in the endoplasmic reticulum membrane. Endoplasmic reticulum (ER)-anchored protein that mediates the formation of contact sites between the ER and endosomes via interaction with FFAT motif-containing proteins such as STARD3 or WDR44. Interacts with STARD3 in a FFAT motif phosphorylation dependent manner. Via interaction with WDR44 participates in neosynthesized protein export. Participates in the endoplasmic reticulum unfolded protein response (UPR) by inducing ERN1/IRE1 activity. Involved in cellular calcium homeostasis regulation. The sequence is that of Vesicle-associated membrane protein-associated protein B from Rattus norvegicus (Rat).